A 365-amino-acid chain; its full sequence is DNA replication and repair protein RecF (365 aa).

An ATP-binding site is contributed by 30 to 37 (GQNGSGKT).

The protein belongs to the RecF family.

The protein localises to the cytoplasm. The RecF protein is involved in DNA metabolism; it is required for DNA replication and normal SOS inducibility. RecF binds preferentially to single-stranded, linear DNA. It also seems to bind ATP. The sequence is that of DNA replication and repair protein RecF from Shewanella halifaxensis (strain HAW-EB4).